The primary structure comprises 1876 residues: MTGSISGEADLRHWLIDYLVTNIGCTPDEVDPDLSLADLGVSSRDAVVLSGELSELLGRTVSPIDFWEHPTINALAAYLAAPEPSPDSDAAVKRGARNSLDEPIAVVGMGCRFPGGISCPEALWDFLCERRSSISQVPPQRWQPFEGGPPEVAAALARTTRWGSFLPDIDAFDAEFFEISPSEADKMDPQQRLLLEVAWEALEHAGIPPGTLRRSATGVFAGACLSEYGAMASADLSQVDGWSNSGGAMSIIANRLSYFLDLRGPSVAVDTACSSSLVAIHLACQSLRTQDCHLAIAAGVNLLLSPAVFRGFDQVGALSPTGQCRAFDATADGFVRGEGAGVVVLKRLTDAQRDGDRVLAVICGSAVTQDGRSNGLMAPNPAAQMAVLRAAYTNAGMQPSEVDYVEAHGTGTLLGDPIEARALGTVLGRGRPEDSPLLIGSVKTNLGHTEAAAGIAGFIKTVLAVQHGQIPPNQHFETANPHIPFTDLRMKVVDTQTEWPATGHPRRAGVSSFGFGGTNAHVVIEQGQEVRPAPGQGLSPAVSTLVVAGKTMQRVSATAGMLADWMEGPGADVALADVAHTLNHHRSRQPKFGTVVARDRTQAIAGLRALAAGQHAPGVVNPAEGSPGPGTVFVYSGRGSQWAGMGRQLLADEPAFAAAVAELEPVFVEQAGFSLHDVLANGEELVGIEQIQLGLIGMQLALTELWCSYGVQPDLVIGHSMGEVAAAVVAGALTPAEGLRVTATRSRLMAPLSGQGGMALLELDAPTTEALIADFPQVTLGIYNSPRQTVIAGPTEQIDELITRVRARDRFASRVNIEVAPHNPAMDALQPAMRSELADLTPRTPTIGIISTTYADLHTQPVFDAEHWATNMRNPVHFQQAIASAGSGADGAYHTFIEISAHPLLTQAIIDTLHSAQPGARYTSLGTLQRDTDDVVTFRTNLNKAHTIHPPHTPHPPEPHPPIPTTPWQHTRHWITTKYPAGSVGSAPRAGTLLGQHTTVATVSASPPSHLWQARLAPDAKPYQGGHRFHQVEVVPASVVLHTILSAATELGYSALSEVRFEQPIFADRPRLIQVVADNRAISLASSPAAGTPSDRWTRHVTAQLSSSPSDSASSLNEHHRANGQPPERAHRDLIPDLAELLAMRGIDGLPFSWTVASWTQHSSNLTVAIDLPEALPEGSTGPLLDAAVHLAALSDVADSRLYVPASIEQISLGDVVTGPRSSVTLNRTAHDDDGITVDVTVAAHGEVPSLSMRSLRYRALDFGLDVGRAQPPASTGPVEAYCDATNFVHTIDWQPQTVPDATHPGAEQVTHPGPVAIIGDDGAALCETLEGAGYQPAVMSDGVSQARYVVYVADSDPAGADETDVDFAVRICTEITGLVRTLAERDADKPAALWILTRGVHESVAPSALRQSFLWGLAGVIAAEHPELWGGLVDLAINDDLGEFGPALAELLAKPSKSILVRRDGVVLAPALAPVRGEPARKSLQCRPDAAYLITGGLGALGLLMADWLADRGAHRLVLTGRTPLPPRRDWQLDTLDTELRRRIDAIRALEMRGVTVEAVAADVGCREDVQALLAARDRDGAAPIRGIIHAAGITNDQLVTSMTGDAVRQVMWPKIGGSQVLHDAFPPGSVDFFYLTASAAGIFGIPGQGSYAAANSYLDALARARRQQGCHTMSLDWVAWRGLGLAADAQLVSEELARMGSRDITPSEAFTAWEFVDGYDVAQAVVVPMPAPAGADGSGANAYLLPARNWSVMAATEVRSELEQGLRRIIAAELRVPEKELDTDRPFAELGLNSLMAMAIRREAEQFVGIELSATMLFNHPTVKSLASYLAKRVAPHDVSQDNQISALSSSAGSVLDSLFDRIESAPPEAERSV.

Residues 9–83 form the Carrier 1 domain; the sequence is ADLRHWLIDY…ALAAYLAAPE (75 aa). Ser43 is modified (O-(pantetheine 4'-phosphoryl)serine). Residues 101 to 526 form the Ketosynthase family 3 (KS3) domain; the sequence is DEPIAVVGMG…GTNAHVVIEQ (426 aa). Active-site for beta-ketoacyl synthase activity residues include Cys273, His408, and His448. The tract at residues 624 to 950 is acyltransferase; the sequence is EGSPGPGTVF…NLNKAHTIHP (327 aa). Ser720 (for malonyltransferase activity) is an active-site residue. An N-terminal hotdog fold region spans residues 997-1112; that stretch reads HTTVATVSAS…AQLSSSPSDS (116 aa). The PKS/mFAS DH domain occupies 997–1267; sequence HTTVATVSAS…YRALDFGLDV (271 aa). The active-site Proton acceptor; for dehydratase activity is the His1027. A disordered region spans residues 1104–1130; that stretch reads QLSSSPSDSASSLNEHHRANGQPPERA. The span at 1106-1115 shows a compositional bias: low complexity; that stretch reads SSSPSDSASS. Residues 1130–1267 are C-terminal hotdog fold; that stretch reads AHRDLIPDLA…YRALDFGLDV (138 aa). Catalysis depends on Asp1186, which acts as the Proton donor; for dehydratase activity. Residues 1491-1728 are beta-ketoacyl reductase; that stretch reads AAYLITGGLG…DGYDVAQAVV (238 aa). Position 1492-1551 (1492-1551) interacts with NADP(+); sequence AYLITGGLGALGLLMADWLADRGAHRLVLTGRTPLPPRRDWQLDTLDTELRRRIDAIRAL. The region spanning 1759–1836 is the Carrier 2 domain; it reads EVRSELEQGL…SLASYLAKRV (78 aa). Residue Ser1796 is modified to O-(pantetheine 4'-phosphoryl)serine.

Requires NADP(+) as cofactor. Pantetheine 4'-phosphate is required as a cofactor.

It catalyses the reaction icosanoyl-[(phenol)carboxyphthiodiolenone synthase] + 2 (S)-methylmalonyl-CoA + 3 malonyl-CoA + 5 NADPH + 10 H(+) = C32-carboxyphthiodiolenone-[(phenol)carboxyphthiodiolenone synthase] + 5 CO2 + 5 NADP(+) + 5 CoA + 2 H2O. The enzyme catalyses docosanoyl-[(phenol)carboxyphthiodiolenone synthase] + 2 (S)-methylmalonyl-CoA + 3 malonyl-CoA + 5 NADPH + 10 H(+) = C34-carboxyphthiodiolenone-[(phenol)carboxyphthiodiolenone synthase] + 5 CO2 + 5 NADP(+) + 5 CoA + 2 H2O. It carries out the reaction 17-(4-hydroxyphenyl)heptadecanoyl-[(phenol)carboxyphthiodiolenone synthase] + 2 (S)-methylmalonyl-CoA + 3 malonyl-CoA + 5 NADPH + 10 H(+) = C35-(phenol)carboxyphthiodiolenone-[(phenol)carboxyphthiodiolenone synthase] + 5 CO2 + 5 NADP(+) + 5 CoA + 2 H2O. The catalysed reaction is 19-(4-hydroxyphenyl)nonadecanoyl-[(phenol)carboxyphthiodiolenone synthase] + 2 (S)-methylmalonyl-CoA + 3 malonyl-CoA + 5 NADPH + 10 H(+) = C37-(phenol)carboxyphthiodiolenone-[(phenol)carboxyphthiodiolenone synthase] + 5 CO2 + 5 NADP(+) + 5 CoA + 2 H2O. It participates in lipid metabolism; fatty acid biosynthesis. In terms of biological role, part of the PpsABCDE complex involved in the biosynthesis of the lipid core common to phthiocerols and phenolphthiocerols by successive additions of malonyl-CoA or methylmalonyl-CoA extender units. PpsA can accept as substrate the activated forms of either icosanoyl (C20), docosanoyl (C22) or lignoceroyl (C24) groups from FadD26, or a (4-hydroxyphenyl)-C17 or (4-hydroxyphenyl)-C19 fatty acyl from FadD29. PpsA initiates the biosynthesis and extends its substrate using a malonyl-CoA extender unit. The PpsB and PpsC proteins add the second and third malonyl-CoA extender units. PpsD adds an (R)-methylmalonyl unit and PpsE adds a second (R)-methylmalonyl unit. The incorporation of the methylmalonyl units results in formation of two branched methyl groups in the elongated product. This chain is Phenolphthiocerol/phthiocerol polyketide synthase subunit A (ppsA), found in Mycobacterium bovis (strain ATCC BAA-935 / AF2122/97).